The chain runs to 642 residues: Conserved oligomeric Golgi complex subunit 6 (642 aa).

The protein belongs to the COG6 family. As to quaternary structure, component of the conserved oligomeric Golgi complex which is composed of eight different subunits and is required for normal Golgi morphology and localization.

The protein localises to the golgi apparatus membrane. In terms of biological role, required for normal Golgi function. This is Conserved oligomeric Golgi complex subunit 6 (cogc-6) from Caenorhabditis elegans.